We begin with the raw amino-acid sequence, 408 residues long: Echinulin prenyltransferase 2 (408 aa).

Dimethylallyl diphosphate is bound by residues arginine 94, lysine 181, tyrosine 183, arginine 248, lysine 250, tyrosine 252, glutamine 334, tyrosine 336, tyrosine 400, and tyrosine 404.

Belongs to the tryptophan dimethylallyltransferase family.

The catalysed reaction is preechinulin + dimethylallyl diphosphate = tardioxopiperazine B + diphosphate. It catalyses the reaction preechinulin + dimethylallyl diphosphate = tardioxopiperazine A + diphosphate. It carries out the reaction tardioxopiperazine A + dimethylallyl diphosphate = echinulin + diphosphate. The enzyme catalyses tardioxopiperazine A + dimethylallyl diphosphate = variecolorin L + diphosphate. The catalysed reaction is neoechinulin A + dimethylallyl diphosphate = variecolorin G + diphosphate. It catalyses the reaction neoechinulin A + dimethylallyl diphosphate = isoechinulin A + diphosphate. It carries out the reaction isoechinulin A + dimethylallyl diphosphate = dehydroechinulin + diphosphate. The enzyme catalyses neoechinulin B + dimethylallyl diphosphate = isoechinulin B + diphosphate. Its pathway is secondary metabolite biosynthesis. The protein operates within alkaloid biosynthesis. Its function is as follows. Prenyltransferase; part of the gene cluster that mediates the biosynthesis of echinulin family alkaloid. The pathway begins with the biosynthesis of the cyclic dipeptide cyclo-L-Trp-L-Ala (cyclo-TA) by the NRPS echPS via condensation of L-alanine and L-tryptophan. The prenyltransferase echPT1 then catalyzes the first prenylation step, a reverse prenylation reaction at C2, to yield preechinulin. Preechinulin is the substrate of the cytochrome P450 monooxygenase echP450 that catalyzes the formation of the double bond between C10 and C11 to produce neoechulin A. The unique prenyltransferase echPT2 functions as a competitive enzyme with echP450 for preechinulin metabolization and uses preechinulin for effective regiospecific prenylations. Preechinulin is prenylated by echPT2 at C5 or C7. C7-prenylation leads to accumulation of tardioxopiperazine B without further modification by echPT2. In contrast, the C5-prenylated tardioxopiperazine A can be prenylated again by echPT2, predominantly at C7 to form echinulin or less frequently at C4 to give variecolorin L. EchPT2 also accepts neoechilunin A to produce varlecolorin G (prenylation at C5) or isoechinulin A (prenylation at C7). EchPT2 further converts isoechinulin A into dehydroechinulin. Moreover, a yet unidentified enzyme can also convert neoechilunin A into neoechilunin B by introducing a double bond between positions C14 and C17 and thus provides a further substrate to echPT2 for C5 and C7 prenylation. In Aspergillus ruber (Eurotium rubrum), this protein is Echinulin prenyltransferase 2.